A 526-amino-acid chain; its full sequence is Peptide chain release factor 3 (526 aa).

The 269-residue stretch at 9–277 (NKRRTFAIIS…DFVEYAPGPQ (269 aa)) folds into the tr-type G domain. GTP contacts are provided by residues 18–25 (SHPDAGKT), 86–90 (DTPGH), and 140–143 (NKLD).

It belongs to the TRAFAC class translation factor GTPase superfamily. Classic translation factor GTPase family. PrfC subfamily.

It is found in the cytoplasm. Functionally, increases the formation of ribosomal termination complexes and stimulates activities of RF-1 and RF-2. It binds guanine nucleotides and has strong preference for UGA stop codons. It may interact directly with the ribosome. The stimulation of RF-1 and RF-2 is significantly reduced by GTP and GDP, but not by GMP. The chain is Peptide chain release factor 3 from Legionella pneumophila (strain Paris).